Consider the following 916-residue polypeptide: Protein translocase subunit SecA (916 aa).

ATP-binding positions include Gln87, 105–109 (GEGKT), and Asp507. Zn(2+) contacts are provided by Cys900, Cys902, Cys911, and His912.

It belongs to the SecA family. Monomer and homodimer. Part of the essential Sec protein translocation apparatus which comprises SecA, SecYEG and auxiliary proteins SecDF-YajC and YidC. Requires Zn(2+) as cofactor.

It localises to the cell inner membrane. Its subcellular location is the cytoplasm. The catalysed reaction is ATP + H2O + cellular proteinSide 1 = ADP + phosphate + cellular proteinSide 2.. Its function is as follows. Part of the Sec protein translocase complex. Interacts with the SecYEG preprotein conducting channel. Has a central role in coupling the hydrolysis of ATP to the transfer of proteins into and across the cell membrane, serving both as a receptor for the preprotein-SecB complex and as an ATP-driven molecular motor driving the stepwise translocation of polypeptide chains across the membrane. This chain is Protein translocase subunit SecA, found in Neisseria meningitidis serogroup C (strain 053442).